The sequence spans 269 residues: Indole-3-glycerol phosphate synthase (269 aa).

It belongs to the TrpC family.

The catalysed reaction is 1-(2-carboxyphenylamino)-1-deoxy-D-ribulose 5-phosphate + H(+) = (1S,2R)-1-C-(indol-3-yl)glycerol 3-phosphate + CO2 + H2O. Its pathway is amino-acid biosynthesis; L-tryptophan biosynthesis; L-tryptophan from chorismate: step 4/5. The protein is Indole-3-glycerol phosphate synthase of Saccharopolyspora erythraea (strain ATCC 11635 / DSM 40517 / JCM 4748 / NBRC 13426 / NCIMB 8594 / NRRL 2338).